The following is a 466-amino-acid chain: ATP synthase subunit beta (466 aa).

155 to 162 (GGAGVGKT) is a binding site for ATP.

The protein belongs to the ATPase alpha/beta chains family. F-type ATPases have 2 components, CF(1) - the catalytic core - and CF(0) - the membrane proton channel. CF(1) has five subunits: alpha(3), beta(3), gamma(1), delta(1), epsilon(1). CF(0) has three main subunits: a(1), b(2) and c(9-12). The alpha and beta chains form an alternating ring which encloses part of the gamma chain. CF(1) is attached to CF(0) by a central stalk formed by the gamma and epsilon chains, while a peripheral stalk is formed by the delta and b chains.

The protein localises to the cell inner membrane. It catalyses the reaction ATP + H2O + 4 H(+)(in) = ADP + phosphate + 5 H(+)(out). Functionally, produces ATP from ADP in the presence of a proton gradient across the membrane. The catalytic sites are hosted primarily by the beta subunits. This chain is ATP synthase subunit beta, found in Bordetella avium (strain 197N).